Consider the following 930-residue polypeptide: APC membrane recruitment protein 1 (930 aa).

Disordered stretches follow at residues methionine 1–valine 33, phenylalanine 55–glutamine 76, cysteine 104–serine 133, threonine 161–threonine 193, glutamate 222–glycine 245, and glutamate 366–serine 454. Over residues glutamate 222–arginine 242 the composition is skewed to basic and acidic residues. Polar residues-rich tracts occupy residues aspartate 377–methionine 399 and serine 413–asparagine 424. Residues glutamate 439–arginine 452 show a composition bias toward basic and acidic residues.

This sequence belongs to the Amer family.

The protein resides in the cytoplasm. Its subcellular location is the cell membrane. It is found in the nucleus. Functionally, regulator of the canonical Wnt signaling pathway. Acts by specifically binding phosphatidylinositol 4,5-bisphosphate (PtdIns(4,5)P2), translocating to the cell membrane and interacting with key regulators of the canonical Wnt signaling pathway, such as components of the beta-catenin destruction complex. Acts both as a positive and negative regulator of the Wnt signaling pathway, depending on the context. This chain is APC membrane recruitment protein 1 (amer1), found in Danio rerio (Zebrafish).